The following is a 333-amino-acid chain: Glyoxylate reductase (333 aa).

Residues 158–161 (FGRI), 180–182 (SRS), and 239–241 (IAR) each bind NADP(+). Catalysis depends on residues Arg241 and Glu270. Residue His288 is the Proton donor of the active site. 288–290 (HIG) contacts NADP(+).

It belongs to the D-isomer specific 2-hydroxyacid dehydrogenase family. GyaR subfamily. In terms of assembly, homodimer.

The protein localises to the cytoplasm. The catalysed reaction is glycolate + NAD(+) = glyoxylate + NADH + H(+). The polypeptide is Glyoxylate reductase (Thermococcus kodakarensis (strain ATCC BAA-918 / JCM 12380 / KOD1) (Pyrococcus kodakaraensis (strain KOD1))).